The following is a 460-amino-acid chain: UDP-N-acetylmuramate--L-alanine ligase (460 aa).

Residue 116 to 122 (GSHGKTT) coordinates ATP.

It belongs to the MurCDEF family.

The protein resides in the cytoplasm. It carries out the reaction UDP-N-acetyl-alpha-D-muramate + L-alanine + ATP = UDP-N-acetyl-alpha-D-muramoyl-L-alanine + ADP + phosphate + H(+). It participates in cell wall biogenesis; peptidoglycan biosynthesis. Its function is as follows. Cell wall formation. The protein is UDP-N-acetylmuramate--L-alanine ligase of Caldanaerobacter subterraneus subsp. tengcongensis (strain DSM 15242 / JCM 11007 / NBRC 100824 / MB4) (Thermoanaerobacter tengcongensis).